Here is a 122-residue protein sequence, read N- to C-terminus: Modulator protein MzrA (122 aa).

The Cytoplasmic portion of the chain corresponds to 1-10; that stretch reads MKILTRIPRR. A helical transmembrane segment spans residues 11-31; the sequence is LLPWLLGGALALVAVSFAPAL. The Periplasmic segment spans residues 32–122; it reads LSHETVVQIR…NQDANRSIYS (91 aa).

This sequence belongs to the MzrA family. Interacts with EnvZ.

The protein localises to the cell inner membrane. Functionally, modulates the activity of the EnvZ/OmpR two-component regulatory system, probably by directly modulating EnvZ enzymatic activity and increasing stability of phosphorylated OmpR. The chain is Modulator protein MzrA from Pantoea sp. (strain At-9b).